The following is a 259-amino-acid chain: Type-2Aa cytolytic delta-endotoxin (259 aa).

This sequence belongs to the cyt1/cyt2 endotoxin family. Homodimer (protoxin) and monomer (active toxin). In terms of processing, active after proteolytic processing.

Its function is as follows. Kills the larvae of dipteran insects by making pores in the epithelial cell membrane of the insect midgut. The protein is Type-2Aa cytolytic delta-endotoxin (cyt2Aa1) of Bacillus thuringiensis subsp. kyushuensis.